A 100-amino-acid polypeptide reads, in one-letter code: uncharacterized protein (100 aa).

It is found in the cytoplasm. The protein resides in the endoplasmic reticulum. This is an uncharacterized protein from Schizosaccharomyces pombe (strain 972 / ATCC 24843) (Fission yeast).